The primary structure comprises 232 residues: Glycerol-3-phosphate acyltransferase (232 aa).

6 consecutive transmembrane segments (helical) span residues F4–G24, V56–F76, I90–A110, M124–V144, V152–F172, and S191–H211.

The protein belongs to the PlsY family. As to quaternary structure, probably interacts with PlsX.

It is found in the cell inner membrane. It carries out the reaction an acyl phosphate + sn-glycerol 3-phosphate = a 1-acyl-sn-glycero-3-phosphate + phosphate. It participates in lipid metabolism; phospholipid metabolism. In terms of biological role, catalyzes the transfer of an acyl group from acyl-phosphate (acyl-PO(4)) to glycerol-3-phosphate (G3P) to form lysophosphatidic acid (LPA). This enzyme utilizes acyl-phosphate as fatty acyl donor, but not acyl-CoA or acyl-ACP. In Chlorobaculum tepidum (strain ATCC 49652 / DSM 12025 / NBRC 103806 / TLS) (Chlorobium tepidum), this protein is Glycerol-3-phosphate acyltransferase.